The primary structure comprises 538 residues: Putative amidase kk1C (538 aa).

The segment at 1–32 (MTEPTWKTVASEKQQQRESKIPSEWQIPKSSH) is disordered. Active-site charge relay system residues include Lys134 and Ser209. Ser233 (acyl-ester intermediate) is an active-site residue.

It belongs to the amidase family.

It carries out the reaction a monocarboxylic acid amide + H2O = a monocarboxylate + NH4(+). It participates in secondary metabolite biosynthesis. Functionally, putative amidase; part of the gene cluster that mediates the biosynthesis of KK-1, a novel cyclic depsipeptide with 10 residues which is a promising active compound with high activity against many plant pathogens, especially Botrytis cinerea. The role of kk1C in KK-1 biosynthesis has still to be determined. The nonribosomal peptide synthetase (NRPS) kk1B catalyzes the elongation and cyclization of the decapeptide chain composed of 1 D-lactic acid residue (D-Lac), 1 pipecolic acid residue (Pip), 1 aspartic acid residue (Asp), 1 isoleucine residue (Ile), 1 glycine residue (Gly), 1 tyrosine residue (Tyr) and 4 valine residues (Val). The Asp, Ile and 3 Val residues are N-methylated by the 5 methyltransferase domains from the NRPS (found in modules 3, 5, 6, 7 and 9), whereas the Tyr residue is O-methylated by the cluster encoded O-methyltransferase kk1A. The thioesterase kk1J is likely to be involved in the corrective mechanism of peptide chain synthesis. The D-lactate dehydrogenase kk1H is involved in the synthesis of D-lactic acid from pyruvic acid, which is recognized by the A domain of the first kk1B module. The pyrroline-5-carboxylate reductase kk1I is involved in the synthesis of the L-pipecolic acid residue of KK-1 from delta-1-pyrroline-5-carboxylate (P5C), a metabolic intermediate of lysine. It is still unclear how kk1C and kk1D are involved in the production of KK-1. This chain is Putative amidase kk1C, found in Curvularia clavata.